We begin with the raw amino-acid sequence, 260 residues long: Indole-3-glycerol phosphate synthase (260 aa).

The protein belongs to the TrpC family.

It catalyses the reaction 1-(2-carboxyphenylamino)-1-deoxy-D-ribulose 5-phosphate + H(+) = (1S,2R)-1-C-(indol-3-yl)glycerol 3-phosphate + CO2 + H2O. It participates in amino-acid biosynthesis; L-tryptophan biosynthesis; L-tryptophan from chorismate: step 4/5. This chain is Indole-3-glycerol phosphate synthase, found in Staphylococcus aureus (strain MRSA252).